A 434-amino-acid polypeptide reads, in one-letter code: Carboxy-terminal-processing protease (434 aa).

Positions 1–23 (MIRKVIFFVAGVFLSASLIVMAQ) are cleaved as a signal peptide. The region spanning 86-166 (DMRDSTKGEF…TPITLTINRF (81 aa)) is the PDZ domain. Active-site charge relay system residues include S294, D305, and K319. Positions 383–392 (HIKGKQESDK) are enriched in basic and acidic residues. The tract at residues 383-406 (HIKGKQESDKGSGSAAFVPRDPKD) is disordered.

This sequence belongs to the peptidase S41A family. In terms of processing, may undergo autocatalytic processing at the C-terminus (398-434 or 425-434 missing).

The protein resides in the secreted. It carries out the reaction The enzyme shows specific recognition of a C-terminal tripeptide, Xaa-Yaa-Zaa, in which Xaa is preferably Ala or Leu, Yaa is preferably Ala or Tyr, and Zaa is preferably Ala, but then cleaves at a variable distance from the C-terminus. A typical cleavage is -Ala-Ala-|-Arg-Ala-Ala-Lys-Glu-Asn-Tyr-Ala-Leu-Ala-Ala.. In terms of biological role, involved in protection of the bacterium from thermal and osmotic stresses. The chain is Carboxy-terminal-processing protease (ctpA) from Bartonella bacilliformis (strain ATCC 35685 / KC583 / Herrer 020/F12,63).